Here is a 316-residue protein sequence, read N- to C-terminus: tRNA dimethylallyltransferase (316 aa).

Position 17 to 24 (17 to 24) interacts with ATP; that stretch reads GPTASGKT. Substrate is bound at residue 19–24; that stretch reads TASGKT. Interaction with substrate tRNA stretches follow at residues 42-45, 166-170, and 247-252; these read DSAL, QRLSR, and RCVGYR.

It belongs to the IPP transferase family. Monomer. The cofactor is Mg(2+).

The enzyme catalyses adenosine(37) in tRNA + dimethylallyl diphosphate = N(6)-dimethylallyladenosine(37) in tRNA + diphosphate. In terms of biological role, catalyzes the transfer of a dimethylallyl group onto the adenine at position 37 in tRNAs that read codons beginning with uridine, leading to the formation of N6-(dimethylallyl)adenosine (i(6)A). The sequence is that of tRNA dimethylallyltransferase from Klebsiella pneumoniae (strain 342).